Consider the following 393-residue polypeptide: MDAATLTYDTLRFEYEDFPETKEPVWILGRKYSVFTEKEEILLDVTSRLWFTYRKNFPAIGGTGPTSDTGWGCMLRCGQMIFAQALVCRHLGRDWRWIKGKRQTDNYFSVLNAFIDKKDSYYSIHQIAQMGVGEGKSIGQWYGPNTVAQVLKKLATFDTWSSLAVHIAMDNTVVMEEIRRLCQSNFSCAGAAACPAVEADVLYNGYPEEAGVRDKLSLWKPLVLLIPLRLGLTEINEAYIETLKHCFMMPQSLGVIGGKPNSAHYFIGYVGEELIYLDPHTTQPAVEPSDSGCLPDESFHCQHPPCRMSIAELDPSIAVGFFCHTEEDFNDWCHQIKKLSLVRGALPMFELVERQPSHFSNPDVLNLTPDSSDADRLERFFDSEDEDFEILSL.

Cys-73 serves as the catalytic Nucleophile. Catalysis depends on residues Asp-278 and His-280. An LIR motif is present at residues 388-391; that stretch reads FEIL.

Belongs to the peptidase C54 family.

It localises to the cytoplasm. The protein resides in the cytosol. Its subcellular location is the cytoplasmic vesicle. The protein localises to the autophagosome. It is found in the endoplasmic reticulum. It localises to the mitochondrion. The catalysed reaction is [protein]-C-terminal L-amino acid-glycyl-phosphatidylethanolamide + H2O = [protein]-C-terminal L-amino acid-glycine + a 1,2-diacyl-sn-glycero-3-phosphoethanolamine. It carries out the reaction [protein]-C-terminal L-amino acid-glycyl-phosphatidylserine + H2O = [protein]-C-terminal L-amino acid-glycine + a 1,2-diacyl-sn-glycero-3-phospho-L-serine. In terms of biological role, cysteine protease that plays a key role in autophagy by mediating both proteolytic activation and delipidation of ATG8 family proteins. Required for canonical autophagy (macroautophagy), non-canonical autophagy as well as for mitophagy. The protease activity is required for proteolytic activation of ATG8 family proteins: cleaves the C-terminal amino acid of ATG8 proteins to reveal a C-terminal glycine. Exposure of the glycine at the C-terminus is essential for ATG8 proteins conjugation to phosphatidylethanolamine (PE) and insertion to membranes, which is necessary for autophagy. Protease activity is also required to counteract formation of high-molecular weight conjugates of ATG8 proteins (ATG8ylation): acts as a deubiquitinating-like enzyme that removes ATG8 conjugated to other proteins, such as ATG3. In addition to the protease activity, also mediates delipidation of ATG8 family proteins. Catalyzes delipidation of PE-conjugated forms of ATG8 proteins during macroautophagy. Also involved in non-canonical autophagy, a parallel pathway involving conjugation of ATG8 proteins to single membranes at endolysosomal compartments, by catalyzing delipidation of ATG8 proteins conjugated to phosphatidylserine (PS). This chain is Cysteine protease ATG4B, found in Gallus gallus (Chicken).